Here is a 182-residue protein sequence, read N- to C-terminus: ADP-ribosylation factor 3 (182 aa).

Residue Gly-2 is the site of N-myristoyl glycine attachment. GTP contacts are provided by residues 24–31, 67–71, and 126–129; these read GLDNAGKT, DLGGQ, and NKQD.

Belongs to the small GTPase superfamily. Arf family. In terms of assembly, interacts with GRIP; but preferentially when bound to GTP.

The protein localises to the golgi apparatus. Functionally, GTP-binding protein involved in protein trafficking; may modulate vesicle budding and uncoating within the Golgi apparatus. This chain is ADP-ribosylation factor 3 (ARF3), found in Arabidopsis thaliana (Mouse-ear cress).